Here is a 194-residue protein sequence, read N- to C-terminus: Fe/S biogenesis protein NfuA (194 aa).

2 residues coordinate [4Fe-4S] cluster: C151 and C154.

The protein belongs to the NfuA family. Homodimer. It depends on [4Fe-4S] cluster as a cofactor.

Its function is as follows. Involved in iron-sulfur cluster biogenesis. Binds a 4Fe-4S cluster, can transfer this cluster to apoproteins, and thereby intervenes in the maturation of Fe/S proteins. Could also act as a scaffold/chaperone for damaged Fe/S proteins. The sequence is that of Fe/S biogenesis protein NfuA from Actinobacillus succinogenes (strain ATCC 55618 / DSM 22257 / CCUG 43843 / 130Z).